The sequence spans 655 residues: p-hydroxybenzoic acid efflux pump subunit AaeB (655 aa).

Transmembrane regions (helical) follow at residues 13–33 (FAVK…HFQL), 38–58 (WAVL…GGEP), 69–89 (LRII…ITMI), 93–113 (LLMI…SSLV), 121–141 (WGLS…EPLL), 152–172 (EIVI…PRSV), 370–390 (LFWL…IAVV), 407–427 (FIYG…VIIP), 431–451 (QSML…GIEV), 459–479 (MGAL…TFHF), and 482–502 (FLDS…VILL).

This sequence belongs to the aromatic acid exporter ArAE (TC 2.A.85) family.

It localises to the cell inner membrane. Its function is as follows. Forms an efflux pump with AaeA. Could function as a metabolic relief valve, allowing to eliminate certain compounds when they accumulate to high levels in the cell. This chain is p-hydroxybenzoic acid efflux pump subunit AaeB, found in Citrobacter koseri (strain ATCC BAA-895 / CDC 4225-83 / SGSC4696).